The following is a 339-amino-acid chain: DNA-directed RNA polymerase subunit alpha (339 aa).

The tract at residues 1 to 233 is alpha N-terminal domain (alpha-NTD); sequence MVREEVAGST…DLFLPFLHAE (233 aa). Residues 264–339 are alpha C-terminal domain (alpha-CTD); the sequence is KKGIPLNCIF…IDLLKNKLSF (76 aa).

This sequence belongs to the RNA polymerase alpha chain family. In plastids the minimal PEP RNA polymerase catalytic core is composed of four subunits: alpha, beta, beta', and beta''. When a (nuclear-encoded) sigma factor is associated with the core the holoenzyme is formed, which can initiate transcription.

It is found in the plastid. It localises to the chloroplast. It carries out the reaction RNA(n) + a ribonucleoside 5'-triphosphate = RNA(n+1) + diphosphate. Functionally, DNA-dependent RNA polymerase catalyzes the transcription of DNA into RNA using the four ribonucleoside triphosphates as substrates. The protein is DNA-directed RNA polymerase subunit alpha of Psathyrostachys fragilis (Russian wild rye).